Reading from the N-terminus, the 689-residue chain is UvrABC system protein B (689 aa).

A disordered region spans residues 1 to 26 (MSDASGPLQPDRPEADVPFRVEAPFD). Positions 40–422 (AGYEQGAQQQ…ERAQSANVVE (383 aa)) constitute a Helicase ATP-binding domain. ATP is bound at residue 53–60 (GVTGSGKT). A Beta-hairpin motif is present at residues 106-129 (YYNYYQPEAYVEQTDKYIEKDASI). Positions 443–605 (QVEDLMDRID…TTPTTIEKAV (163 aa)) constitute a Helicase C-terminal domain. One can recognise a UVR domain in the interval 632 to 667 (ALLVEDLEARMEDAASNLEFELAADIRDRMRELREA). Residues 668 to 689 (FDLDGGDAPEDPGGVAPETEDW) are disordered.

This sequence belongs to the UvrB family. Forms a heterotetramer with UvrA during the search for lesions. Interacts with UvrC in an incision complex.

It localises to the cytoplasm. Functionally, the UvrABC repair system catalyzes the recognition and processing of DNA lesions. A damage recognition complex composed of 2 UvrA and 2 UvrB subunits scans DNA for abnormalities. Upon binding of the UvrA(2)B(2) complex to a putative damaged site, the DNA wraps around one UvrB monomer. DNA wrap is dependent on ATP binding by UvrB and probably causes local melting of the DNA helix, facilitating insertion of UvrB beta-hairpin between the DNA strands. Then UvrB probes one DNA strand for the presence of a lesion. If a lesion is found the UvrA subunits dissociate and the UvrB-DNA preincision complex is formed. This complex is subsequently bound by UvrC and the second UvrB is released. If no lesion is found, the DNA wraps around the other UvrB subunit that will check the other stand for damage. In Halobacterium salinarum (strain ATCC 700922 / JCM 11081 / NRC-1) (Halobacterium halobium), this protein is UvrABC system protein B.